The chain runs to 261 residues: Guanine nucleotide exchange factor BopE (261 aa).

The protein belongs to the GEF (guanine exchange factor) SopE family. As to quaternary structure, monomer. Interacts with human CDC42.

The protein resides in the secreted. Functionally, activator for both CDC42 and RAC1 by directly interacting with these Rho GTPases and acting as a guanine nucleotide exchange factor (GEF). This activation results in actin cytoskeleton rearrangements and stimulates membrane ruffling, thus promoting bacterial entry into non-phagocytic cells. This chain is Guanine nucleotide exchange factor BopE (bopE), found in Burkholderia pseudomallei (strain 1710b).